Reading from the N-terminus, the 123-residue chain is ATP synthase epsilon chain (123 aa).

The protein belongs to the ATPase epsilon chain family. In terms of assembly, F-type ATPases have 2 components, CF(1) - the catalytic core - and CF(0) - the membrane proton channel. CF(1) has five subunits: alpha(3), beta(3), gamma(1), delta(1), epsilon(1). CF(0) has three main subunits: a, b and c.

Its subcellular location is the cell inner membrane. Produces ATP from ADP in the presence of a proton gradient across the membrane. This is ATP synthase epsilon chain from Helicobacter pylori (strain HPAG1).